The chain runs to 225 residues: UPF0758 protein SO_4248 (225 aa).

The MPN domain occupies 102-224 (VLTNPDLTRD…IVSFAERGWI (123 aa)). His-173, His-175, and Asp-186 together coordinate Zn(2+). The JAMM motif motif lies at 173-186 (HNHPSGIAEPSQAD).

The protein belongs to the UPF0758 family.

The polypeptide is UPF0758 protein SO_4248 (Shewanella oneidensis (strain ATCC 700550 / JCM 31522 / CIP 106686 / LMG 19005 / NCIMB 14063 / MR-1)).